A 568-amino-acid chain; its full sequence is Proline--tRNA ligase (568 aa).

It belongs to the class-II aminoacyl-tRNA synthetase family. ProS type 1 subfamily. Homodimer.

The protein resides in the cytoplasm. The catalysed reaction is tRNA(Pro) + L-proline + ATP = L-prolyl-tRNA(Pro) + AMP + diphosphate. In terms of biological role, catalyzes the attachment of proline to tRNA(Pro) in a two-step reaction: proline is first activated by ATP to form Pro-AMP and then transferred to the acceptor end of tRNA(Pro). As ProRS can inadvertently accommodate and process non-cognate amino acids such as alanine and cysteine, to avoid such errors it has two additional distinct editing activities against alanine. One activity is designated as 'pretransfer' editing and involves the tRNA(Pro)-independent hydrolysis of activated Ala-AMP. The other activity is designated 'posttransfer' editing and involves deacylation of mischarged Ala-tRNA(Pro). The misacylated Cys-tRNA(Pro) is not edited by ProRS. The chain is Proline--tRNA ligase from Campylobacter jejuni subsp. jejuni serotype O:6 (strain 81116 / NCTC 11828).